A 112-amino-acid chain; its full sequence is MEFDSYIDWYNNLLTMPLNDVILGVKDTIEDKTVYLSLSDSKVIKMDNTSFVMGYYYQVVLSVKDVDDELVGLVGNVLQNGWNMTNWSENSHLYNYTGTVYLPCGAGGQAWQ.

This sequence belongs to the skunalikevirus head completion protein 2 family.

The protein resides in the virion. Its function is as follows. Probably functions as a stopper that is part of the head-tail connector and that locks the viral DNA in the capsid. During assembly, functions as a docking platform which the preassembled tail can bind to. Plays a role in morphogenesis of the virion capsid after genome packaging. This chain is Probable head completion protein 2, found in Lactococcus phage p2 (Lactococcus lactis bacteriophage p2).